The sequence spans 186 residues: uncharacterized protein (186 aa).

4 consecutive transmembrane segments (helical) span residues 5-25 (LIAC…FEDI), 39-59 (IITI…KLFA), 62-82 (NLLF…ILLF), and 122-142 (GFFE…IALM).

It localises to the cell membrane. This is an uncharacterized protein from Borreliella burgdorferi (strain ATCC 35210 / DSM 4680 / CIP 102532 / B31) (Borrelia burgdorferi).